A 902-amino-acid chain; its full sequence is MMASLSCVEDKMKTSCLVNGGGTITTTTSQSTLLEEMKLLKDQSGTRKPVINSELWHACAGPLVCLPQVGSLVYYFSQGHSEQVAVSTRRSATTQVPNYPNLPSQLMCQVHNVTLHADKDSDEIYAQMSLQPVHSERDVFPVPDFGMLRGSKHPTEFFCKTLTASDTSTHGGFSVPRRAAEKLFPPLDYSAQPPTQELVVRDLHENTWTFRHIYRGQPKRHLLTTGWSLFVGSKRLRAGDSVLFIRDEKSQLMVGVRRANRQQTALPSSVLSADSMHIGVLAAAAHATANRTPFLIFYNPRACPAEFVIPLAKYRKAICGSQLSVGMRFGMMFETEDSGKRRYMGTIVGISDLDPLRWPGSKWRNLQVEWDEPGCNDKPTRVSPWDIETPESLFIFPSLTSGLKRQLHPSYFAGETEWGSLIKRPLIRVPDSANGIMPYASFPSMASEQLMKMMMRPHNNQNVPSFMSEMQQNIVMGNGGLLGDMKMQQPLMMNQKSEMVQPQNKLTVNPSASNTSGQEQNLSQSMSAPAKPENSTLSGCSSGRVQHGLEQSMEQASQVTTSTVCNEEKVNQLLQKPGASSPVQADQCLDITHQIYQPQSDPINGFSFLETDELTSQVSSFQSLAGSYKQPFILSSQDSSAVVLPDSTNSPLFHDVWDTQLNGLKFDQFSPLMQQDLYASQNICMSNSTTSNILDPPLSNTVLDDFCAIKDTDFQNHPSGCLVGNNNTSFAQDVQSQITSASFADSQAFSRQDFPDNSGGTGTSSSNVDFDDCSLRQNSKGSSWQKIATPRVRTYTKVQKTGSVGRSIDVTSFKDYEELKSAIECMFGLEGLLTHPQSSGWKLVYVDYESDVLLVGDDPWEEFVGCVRCIRILSPTEVQQMSEEGMKLLNSAGINDLKTSVS.

The segment at residues 158-260 (FCKTLTASDT…QLMVGVRRAN (103 aa)) is a DNA-binding region (TF-B3). The disordered stretch occupies residues 497–543 (SEMVQPQNKLTVNPSASNTSGQEQNLSQSMSAPAKPENSTLSGCSSG). In terms of domain architecture, PB1 spans 793 to 877 (RTYTKVQKTG…RCIRILSPTE (85 aa)).

This sequence belongs to the ARF family. In terms of assembly, homodimers and heterodimers. Interacts with BRX and the auxin-responsive proteins IAA1, IAA12 (BODENLOS), IAA17 and ARF7. Expressed in the whole plant with a lower expression in leaves. Detected in embryo axis, provascular tissues, procambium and some differentiated vascular regions of mature organs.

It localises to the nucleus. Its function is as follows. Auxin response factors (ARFs) are transcriptional factors that bind specifically to the DNA sequence 5'-TGTCTC-3' found in the auxin-responsive promoter elements (AuxREs). Seems to act as transcriptional activator. Formation of heterodimers with Aux/IAA proteins may alter their ability to modulate early auxin response genes expression. Mediates embryo axis formation and vascular tissues differentiation. Functionally redundant with ARF7. May be necessary to counteract AMP1 activity. This Arabidopsis thaliana (Mouse-ear cress) protein is Auxin response factor 5 (ARF5).